Reading from the N-terminus, the 196-residue chain is Ribonuclease HII (196 aa).

The region spanning 15–196 is the RNase H type-2 domain; the sequence is FILAGIDEAG…RLSFTKALYK (182 aa). The a divalent metal cation site is built by Asp21, Glu22, and Asp112.

This sequence belongs to the RNase HII family. Requires Mn(2+) as cofactor. Mg(2+) is required as a cofactor.

It is found in the cytoplasm. The catalysed reaction is Endonucleolytic cleavage to 5'-phosphomonoester.. Its function is as follows. Endonuclease that specifically degrades the RNA of RNA-DNA hybrids. The chain is Ribonuclease HII from Rickettsia bellii (strain OSU 85-389).